We begin with the raw amino-acid sequence, 492 residues long: MESRTTGPLTTETYDGPTVAFMILGAALVFFMVPGLGFLYSGLARRKSALALIWVVLMATLVGILQWYFWGYSLAFSKSAPNNKFIGNLDSFGFRNVYGKKFDEDAYPELAYATFQMMFSCVNLSIIAGATAERGRLLPHMVFLFILATIGYCPVTYWIWSPGGWAYQWGVLDWAGGGNIEILSAVSGFVYSWFLGKRNEKLLINFRPHNVSLVTLGTSILWFGWLLFNSASSLSPNLRSVYAFMNTCLSAITGGMTWCLLDYRSEKKWSTVGLCSGIISGLVAATPSSGCITLYGSLIQGIVAGVVCNFATKLKYYAKVDDAMDILAEHGVAGVIGLIFNALFGADWVIGMDGTTEHEGGWVTHNYKQMYKQIAYIAASIGYTAAVTAIICFVLGYIPGMRLRISEEAEEAGMDEDQIGEFAYDYVEVRRDYYLWGVDEDSQRSDVNHRVNNAHLAAERSSSGTNSSSDGNGEMIQSEKILPIHQEDPANR.

The Extracellular portion of the chain corresponds to 1–18 (MESRTTGPLTTETYDGPT). Residues 19-39 (VAFMILGAALVFFMVPGLGFL) traverse the membrane as a helical segment. Residues 40-49 (YSGLARRKSA) lie on the Cytoplasmic side of the membrane. Residues 50–70 (LALIWVVLMATLVGILQWYFW) traverse the membrane as a helical segment. At 71–109 (GYSLAFSKSAPNNKFIGNLDSFGFRNVYGKKFDEDAYPE) the chain is on the extracellular side. The helical transmembrane segment at 110-130 (LAYATFQMMFSCVNLSIIAGA) threads the bilayer. Topologically, residues 131-140 (TAERGRLLPH) are cytoplasmic. A helical membrane pass occupies residues 141–161 (MVFLFILATIGYCPVTYWIWS). Over 162 to 174 (PGGWAYQWGVLDW) the chain is Extracellular. Residues 175–195 (AGGGNIEILSAVSGFVYSWFL) form a helical membrane-spanning segment. Residues 196–210 (GKRNEKLLINFRPHN) lie on the Cytoplasmic side of the membrane. Residues 211 to 231 (VSLVTLGTSILWFGWLLFNSA) form a helical membrane-spanning segment. Topologically, residues 232-240 (SSLSPNLRS) are extracellular. A helical membrane pass occupies residues 241–261 (VYAFMNTCLSAITGGMTWCLL). Over 262-268 (DYRSEKK) the chain is Cytoplasmic. A helical transmembrane segment spans residues 269–289 (WSTVGLCSGIISGLVAATPSS). G290 is a topological domain (extracellular). Residues 291-311 (CITLYGSLIQGIVAGVVCNFA) form a helical membrane-spanning segment. The Cytoplasmic portion of the chain corresponds to 312-331 (TKLKYYAKVDDAMDILAEHG). The helical transmembrane segment at 332–352 (VAGVIGLIFNALFGADWVIGM) threads the bilayer. Residues 353–373 (DGTTEHEGGWVTHNYKQMYKQ) are Extracellular-facing. The chain crosses the membrane as a helical span at residues 374 to 394 (IAYIAASIGYTAAVTAIICFV). Topologically, residues 395 to 492 (LGYIPGMRLR…PIHQEDPANR (98 aa)) are cytoplasmic. Phosphoserine is present on residues S442 and S445. A disordered region spans residues 455-492 (HLAAERSSSGTNSSSDGNGEMIQSEKILPIHQEDPANR). A compositionally biased stretch (low complexity) spans 461–473 (SSSGTNSSSDGNG).

It belongs to the ammonia transporter channel (TC 1.A.11.2) family.

It localises to the membrane. Its function is as follows. Transporter for ammonium (both charged and uncharged NH3 and NH4) to use as a nitrogen source. Can also transport methylamine. The affinity of MEP1 is about twenty times lower than that of MEP2. MEP3 has the lowest affinity. The chain is Ammonium transporter MEP1 (MEP1) from Saccharomyces cerevisiae (strain ATCC 204508 / S288c) (Baker's yeast).